The chain runs to 360 residues: Decorin (360 aa).

Positions 1 to 16 (MKATIIFLLLAQVSWA) are cleaved as a signal peptide. Positions 17–30 (GPFQQRGLFDFMLE) are excised as a propeptide. Ser34 carries O-linked (Xyl...) (glycosaminoglycan) serine glycosylation. 2 disulfides stabilise this stretch: Cys55–Cys61 and Cys59–Cys68. LRR repeat units follow at residues 74–94 (DKVP…NNKI), 95–118 (TEIK…NNKI), 119–142 (SKIS…KNHL), 143–163 (KELP…ENEI), 164–187 (TKVR…TNPL), 188–213 (KSSG…DTNI), 214–234 (TTIP…GNKI), 235–258 (TKVD…FNSI), 259–282 (SAVD…NNKL), 283–305 (IKVP…NNNI), 306–335 (SAVG…SNPV), and 336–360 (QYWE…GNYK). The N-linked (GlcNAc...) asparagine glycan is linked to Asn212. N-linked (GlcNAc...) asparagine glycosylation is found at Asn263 and Asn304. The cysteines at positions 314 and 347 are disulfide-linked.

Belongs to the small leucine-rich proteoglycan (SLRP) family. SLRP class I subfamily. Binds to type I and type II collagen, fibronectin and TGF-beta. Forms a ternary complex with MFAP2 and ELN. Interacts with DPT. The attached glycosaminoglycan chain can be either chondroitin sulfate or dermatan sulfate depending upon the tissue of origin.

It localises to the secreted. Its subcellular location is the extracellular space. The protein resides in the extracellular matrix. Its function is as follows. May affect the rate of fibrils formation. This Equus caballus (Horse) protein is Decorin (DCN).